We begin with the raw amino-acid sequence, 82 residues long: Large ribosomal subunit protein uL24c (82 aa).

Belongs to the universal ribosomal protein uL24 family. In terms of assembly, part of the 50S ribosomal subunit.

The protein resides in the plastid. It is found in the chloroplast. Its function is as follows. One of two assembly initiator proteins, it binds directly to the 5'-end of the 23S rRNA, where it nucleates assembly of the 50S subunit. This is Large ribosomal subunit protein uL24c (rpl24) from Phaeodactylum tricornutum (strain CCAP 1055/1).